The sequence spans 181 residues: Bifunctional protein PyrR (181 aa).

Substrate contacts are provided by residues T41–R42, R82, R86, D103–T111, R136, and V160. The short motif at I99–T111 is the PRPP-binding element.

The protein belongs to the purine/pyrimidine phosphoribosyltransferase family. PyrR subfamily.

It catalyses the reaction UMP + diphosphate = 5-phospho-alpha-D-ribose 1-diphosphate + uracil. Probably regulates transcriptional attenuation of the pyrimidine nucleotide (pyr) operon in response to exogenous pyrimidines. In contrast to pyr attenuation in Bacillus, PyrR from Thermus could act as a translational repressor: the binding of PyrR at its proposed recognition site in the transcript would prevent initiation of translation of the leader peptide, resulting in terminator formation and reduced expression of downstream genes. Also displays uracil phosphoribosyltransferase activity. The protein is Bifunctional protein PyrR (pyrR) of Thermus thermophilus (strain ATCC BAA-163 / DSM 7039 / HB27).